A 369-amino-acid chain; its full sequence is Peptide chain release factor 2 (369 aa).

Q249 is modified (N5-methylglutamine).

This sequence belongs to the prokaryotic/mitochondrial release factor family. Post-translationally, methylated by PrmC. Methylation increases the termination efficiency of RF2.

It is found in the cytoplasm. In terms of biological role, peptide chain release factor 2 directs the termination of translation in response to the peptide chain termination codons UGA and UAA. This chain is Peptide chain release factor 2, found in Thermosipho melanesiensis (strain DSM 12029 / CIP 104789 / BI429).